The chain runs to 709 residues: Polyribonucleotide nucleotidyltransferase (709 aa).

The Mg(2+) site is built by aspartate 487 and aspartate 493. The region spanning proline 554 to isoleucine 613 is the KH domain. The S1 motif domain occupies glycine 623 to lysine 691.

Belongs to the polyribonucleotide nucleotidyltransferase family. In terms of assembly, component of the RNA degradosome, which is a multiprotein complex involved in RNA processing and mRNA degradation. Mg(2+) serves as cofactor.

It localises to the cytoplasm. It carries out the reaction RNA(n+1) + phosphate = RNA(n) + a ribonucleoside 5'-diphosphate. Its function is as follows. Involved in mRNA degradation. Catalyzes the phosphorolysis of single-stranded polyribonucleotides processively in the 3'- to 5'-direction. The chain is Polyribonucleotide nucleotidyltransferase from Aliivibrio fischeri (strain MJ11) (Vibrio fischeri).